The sequence spans 485 residues: Glutamyl-tRNA(Gln) amidotransferase subunit A (485 aa).

Residues lysine 78 and serine 153 each act as charge relay system in the active site. The Acyl-ester intermediate role is filled by serine 177.

Belongs to the amidase family. GatA subfamily. As to quaternary structure, heterotrimer of A, B and C subunits.

It catalyses the reaction L-glutamyl-tRNA(Gln) + L-glutamine + ATP + H2O = L-glutaminyl-tRNA(Gln) + L-glutamate + ADP + phosphate + H(+). Its function is as follows. Allows the formation of correctly charged Gln-tRNA(Gln) through the transamidation of misacylated Glu-tRNA(Gln) in organisms which lack glutaminyl-tRNA synthetase. The reaction takes place in the presence of glutamine and ATP through an activated gamma-phospho-Glu-tRNA(Gln). The chain is Glutamyl-tRNA(Gln) amidotransferase subunit A from Bacillus cytotoxicus (strain DSM 22905 / CIP 110041 / 391-98 / NVH 391-98).